Reading from the N-terminus, the 112-residue chain is Transmembrane protein 14C (112 aa).

A run of 4 helical transmembrane segments spans residues 7–27 (VVPL…GGII), 32–52 (AGSV…SLGA), 62–82 (VWVF…RFYH), and 86–106 (FMPA…VGVS).

Belongs to the TMEM14 family.

The protein resides in the mitochondrion membrane. Required for normal heme biosynthesis. The protein is Transmembrane protein 14C (TMEM14C) of Pongo abelii (Sumatran orangutan).